The chain runs to 164 residues: 6,7-dimethyl-8-ribityllumazine synthase (164 aa).

Residues F24, 62–64, and 86–88 contribute to the 5-amino-6-(D-ribitylamino)uracil site; these read SFE and AVI. 91–92 contacts (2S)-2-hydroxy-3-oxobutyl phosphate; that stretch reads QT. H94 (proton donor) is an active-site residue. 5-amino-6-(D-ribitylamino)uracil is bound at residue F119. R133 serves as a coordination point for (2S)-2-hydroxy-3-oxobutyl phosphate.

It belongs to the DMRL synthase family.

It carries out the reaction (2S)-2-hydroxy-3-oxobutyl phosphate + 5-amino-6-(D-ribitylamino)uracil = 6,7-dimethyl-8-(1-D-ribityl)lumazine + phosphate + 2 H2O + H(+). It functions in the pathway cofactor biosynthesis; riboflavin biosynthesis; riboflavin from 2-hydroxy-3-oxobutyl phosphate and 5-amino-6-(D-ribitylamino)uracil: step 1/2. In terms of biological role, catalyzes the formation of 6,7-dimethyl-8-ribityllumazine by condensation of 5-amino-6-(D-ribitylamino)uracil with 3,4-dihydroxy-2-butanone 4-phosphate. This is the penultimate step in the biosynthesis of riboflavin. The protein is 6,7-dimethyl-8-ribityllumazine synthase of Synechocystis sp. (strain ATCC 27184 / PCC 6803 / Kazusa).